Reading from the N-terminus, the 557-residue chain is Putative inactive polypeptide N-acetylgalactosaminyltransferase 11 (557 aa).

The Cytoplasmic portion of the chain corresponds to 1 to 4; it reads MKSL. A helical; Signal-anchor for type II membrane protein membrane pass occupies residues 5–27; that stretch reads LFGTPCSCAIFILVYCIITLFIW. Residues 28 to 557 are Lumenal-facing; it reads FLYTDNLSNA…MRDICLSVNH (530 aa). N-linked (GlcNAc...) asparagine glycosylation is found at N33 and N103. Cystine bridges form between C99/C325, C316/C397, C437/C450, C472/C486, and C511/C526. Positions 109-215 are catalytic subdomain A; sequence TVTVSIVIAI…RGWLPPLLEP (107 aa). Residue N220 is glycosylated (N-linked (GlcNAc...) asparagine). Residues 271 to 333 form a catalytic subdomain B region; the sequence is PYPSSQLEGR…PCSRVGIIYK (63 aa). N379 carries an N-linked (GlcNAc...) asparagine glycan. One can recognise a Ricin B-type lectin domain in the interval 456 to 557; that stretch reads EDWTLTSRCQ…MRDICLSVNH (102 aa).

Belongs to the glycosyltransferase 2 family. GalNAc-T subfamily.

It is found in the golgi apparatus membrane. In terms of biological role, probable inactive glycosyltransferase. The sequence is that of Putative inactive polypeptide N-acetylgalactosaminyltransferase 11 from Drosophila melanogaster (Fruit fly).